Consider the following 181-residue polypeptide: CASP-like protein 1F2 (181 aa).

The Cytoplasmic portion of the chain corresponds to 1–18 (MADIETKSSQNQPLKTQN). A helical membrane pass occupies residues 19–39 (IFIGAQIFLRIVVIAASFAST). Over 40-70 (WLMLTNKQTIDIGGFVLDANYSYSPEFKFLS) the chain is Extracellular. N-linked (GlcNAc...) asparagine glycosylation occurs at Asn59. A helical transmembrane segment spans residues 71–91 (YANIVVGAFSFVSLLFLVLVG). Topologically, residues 92–100 (RRSSNPTYY) are cytoplasmic. The chain crosses the membrane as a helical span at residues 101–121 (FILFLHDLALMSLVLGGCAAA). Over 122-150 (TVIGSLGKYGNSHTGWMQICDHFGKFCKR) the chain is Extracellular. Residues 151–171 (ATTSVAFSYFSLVCLLILTIT) traverse the membrane as a helical segment. Residues 172 to 181 (SASKSRQIQV) lie on the Cytoplasmic side of the membrane.

The protein belongs to the Casparian strip membrane proteins (CASP) family. As to quaternary structure, homodimer and heterodimers.

It localises to the cell membrane. This is CASP-like protein 1F2 from Populus trichocarpa (Western balsam poplar).